Here is a 495-residue protein sequence, read N- to C-terminus: MAATFQYPFQCIKSVERRNSGRQLIIGSAGPKIYTYAAETGERLGIWPETANTAEAKAAPSTTGEEPPEKRRKVSPPPDQKPEDSEPASQKSRKPEASPAWSTIPILAVSADGEYVVAVTAEDKCIRVFEVEENGALKQLSERQMPKRPSAIALADDDRTILCGDKFGDVYSLPLIDTGKGSVAPRAPAKVRPDQPAATTLTVHSKRNLASLEQQLRHYGQKDKNSAEEKPSSTFEHHLLLGHVSMLTDLICVSIPMDSSSEKKRSYILTADRDEHIRVSRGPSQAHIIENYCLGHTSFVNSLCIPQWAPEYLVSGGGDNYLLVWRWNEGRIVQKVPLVDETSDSEVAVRGIWVTDKMVLVAIDGSAKLLCFTLESDGTMKAQNSIQASGNVLDLTISSKDSAVLVSVDAVHVAGSTQEWRATPSSSSTLIEAFRLKSDTENVEWEPMSEAITSQVNSQGTSEISATLEEKQKKELNDALYSSGNLRKKNLGEDE.

A disordered region spans residues 51 to 100 (ANTAEAKAAPSTTGEEPPEKRRKVSPPPDQKPEDSEPASQKSRKPEASPA). 3 WD repeats span residues 99–139 (PAWS…ALKQ), 245–290 (SMLT…HIIE), and 295–337 (GHTS…QKVP).

The protein belongs to the WD repeat TRM82 family. Forms a heterodimer with the catalytic subunit trm8.

Its subcellular location is the nucleus. It participates in tRNA modification; N(7)-methylguanine-tRNA biosynthesis. Its function is as follows. Required for the formation of N(7)-methylguanine at position 46 (m7G46) in tRNA. In the complex, it is required to stabilize and induce conformational changes of the catalytic subunit. The chain is tRNA (guanine-N(7)-)-methyltransferase non-catalytic subunit trm82 (trm82) from Aspergillus clavatus (strain ATCC 1007 / CBS 513.65 / DSM 816 / NCTC 3887 / NRRL 1 / QM 1276 / 107).